The primary structure comprises 229 residues: Peptidase E (229 aa).

Catalysis depends on charge relay system residues S120, D135, and H157.

Belongs to the peptidase S51 family.

It localises to the cytoplasm. The enzyme catalyses Dipeptidase E catalyzes the hydrolysis of dipeptides Asp-|-Xaa. It does not act on peptides with N-terminal Glu, Asn or Gln, nor does it cleave isoaspartyl peptides.. Hydrolyzes dipeptides containing N-terminal aspartate residues. May play a role in allowing the cell to use peptide aspartate to spare carbon otherwise required for the synthesis of the aspartate family of amino acids. The chain is Peptidase E from Salmonella newport (strain SL254).